A 259-amino-acid chain; its full sequence is GEM-like protein 1 (259 aa).

Over residues 1-11 (MSGQENHDHGR) the composition is skewed to basic and acidic residues. The segment at 1–79 (MSGQENHDHG…PSPAPRNTMD (79 aa)) is disordered. Over residues 13 to 30 (SSTPAAASEPSKAAAHSS) the composition is skewed to low complexity. Residues 138-215 (KVFKQTFDCL…NQLKAVNPST (78 aa)) enclose the GRAM domain.

The protein belongs to the GEM family. Interacts with AFH1.

This is GEM-like protein 1 (FIP1) from Arabidopsis thaliana (Mouse-ear cress).